Consider the following 284-residue polypeptide: Bifunctional protein FolD (284 aa).

NADP(+) contacts are provided by residues 165–167 (GRS), serine 190, and isoleucine 231.

This sequence belongs to the tetrahydrofolate dehydrogenase/cyclohydrolase family. As to quaternary structure, homodimer.

The catalysed reaction is (6R)-5,10-methylene-5,6,7,8-tetrahydrofolate + NADP(+) = (6R)-5,10-methenyltetrahydrofolate + NADPH. It carries out the reaction (6R)-5,10-methenyltetrahydrofolate + H2O = (6R)-10-formyltetrahydrofolate + H(+). It participates in one-carbon metabolism; tetrahydrofolate interconversion. Its function is as follows. Catalyzes the oxidation of 5,10-methylenetetrahydrofolate to 5,10-methenyltetrahydrofolate and then the hydrolysis of 5,10-methenyltetrahydrofolate to 10-formyltetrahydrofolate. In Dechloromonas aromatica (strain RCB), this protein is Bifunctional protein FolD.